Consider the following 544-residue polypeptide: Chaperonin GroEL 1 (544 aa).

ATP-binding positions include 29–32, 86–90, G413, 479–481, and D495; these read TLGP, DGTTT, and NAA. The disordered stretch occupies residues 525–544; that stretch reads PEPKDNAPAGAGAGGGDFDY. Over residues 535 to 544 the composition is skewed to gly residues; sequence AGAGGGDFDY.

This sequence belongs to the chaperonin (HSP60) family. Forms a cylinder of 14 subunits composed of two heptameric rings stacked back-to-back. Interacts with the co-chaperonin GroES.

It is found in the cytoplasm. It catalyses the reaction ATP + H2O + a folded polypeptide = ADP + phosphate + an unfolded polypeptide.. Its function is as follows. Together with its co-chaperonin GroES, plays an essential role in assisting protein folding. The GroEL-GroES system forms a nano-cage that allows encapsulation of the non-native substrate proteins and provides a physical environment optimized to promote and accelerate protein folding. The chain is Chaperonin GroEL 1 from Nostoc sp. (strain PCC 7120 / SAG 25.82 / UTEX 2576).